A 426-amino-acid polypeptide reads, in one-letter code: Enolase (426 aa).

Glutamine 163 contacts (2R)-2-phosphoglycerate. Glutamate 205 functions as the Proton donor in the catalytic mechanism. Mg(2+)-binding residues include aspartate 242, glutamate 283, and aspartate 310. Positions 335, 364, 365, and 386 each coordinate (2R)-2-phosphoglycerate. Lysine 335 serves as the catalytic Proton acceptor.

This sequence belongs to the enolase family. Requires Mg(2+) as cofactor.

It localises to the cytoplasm. The protein resides in the secreted. The protein localises to the cell surface. The enzyme catalyses (2R)-2-phosphoglycerate = phosphoenolpyruvate + H2O. The protein operates within carbohydrate degradation; glycolysis; pyruvate from D-glyceraldehyde 3-phosphate: step 4/5. Catalyzes the reversible conversion of 2-phosphoglycerate (2-PG) into phosphoenolpyruvate (PEP). It is essential for the degradation of carbohydrates via glycolysis. This Beutenbergia cavernae (strain ATCC BAA-8 / DSM 12333 / CCUG 43141 / JCM 11478 / NBRC 16432 / NCIMB 13614 / HKI 0122) protein is Enolase.